Reading from the N-terminus, the 208-residue chain is Proheparin-binding EGF-like growth factor (208 aa).

Positions 1–23 (MKLLPSVVLKLFLAAVFSALVTG) are cleaved as a signal peptide. Positions 24 to 62 (ESLERLRRGLADGTSNLVSPTESTDQLLPPGGGRGREVL) are excised as a propeptide. Residues 24–161 (ESLERLRRGL…NRLYTYDHTT (138 aa)) lie on the Extracellular side of the membrane. Positions 37–49 (TSNLVSPTESTDQ) are enriched in polar residues. Disordered stretches follow at residues 37–57 (TSNL…GGGR) and 81–104 (QALA…LGKK). Threonine 85 is a glycosylation site (O-linked (GalNAc...) threonine). Residues 93–102 (KRKKKGKGLG) are compositionally biased toward basic residues. Residues 104–144 (KRDPCLRKYKDFCIHGECKYVKELRAPSCICHPGYHGERCH) form the EGF-like domain. 3 disulfides stabilise this stretch: cysteine 108–cysteine 121, cysteine 116–cysteine 132, and cysteine 134–cysteine 143. The propeptide at 149–208 (PVKNRLYTYDHTTILAVVAVVLSSVCLLVIVGLLMFRYHRRGGYDVENEEKVKLGVTASH) is C-terminal. Residues 162-182 (ILAVVAVVLSSVCLLVIVGLL) traverse the membrane as a helical segment. Over 183-208 (MFRYHRRGGYDVENEEKVKLGVTASH) the chain is Cytoplasmic.

Interacts with FBLN1. Interacts with EGFR and ERBB4. O-glycosylated. As to expression, macrophages, midbrain, cerebellum, hypothalamus, cerebral cortex, bulbourethral gland, lung, heart ventricle, kidney, skin, prostate, seminal vesicle, testis; at low levels in lymph node, thymus, spleen; not detected in pituitary, olfactory bulb, thyroid, duodenum, pancreas, liver, submaxillary gland.

It localises to the secreted. The protein localises to the extracellular space. Its subcellular location is the cell membrane. Functionally, growth factor that mediates its effects via EGFR, ERBB2 and ERBB4. Required for normal cardiac valve formation and normal heart function. Promotes smooth muscle cell proliferation. May be involved in macrophage-mediated cellular proliferation. It is mitogenic for fibroblasts, but not endothelial cells. It is able to bind EGF receptor/EGFR with higher affinity than EGF itself and is a far more potent mitogen for smooth muscle cells than EGF. Also acts as a diphtheria toxin receptor. This chain is Proheparin-binding EGF-like growth factor (HBEGF), found in Sus scrofa (Pig).